Here is a 137-residue protein sequence, read N- to C-terminus: Photosystem II reaction center W protein, chloroplastic (137 aa).

A chloroplast-targeting transit peptide spans 1 to 64; it reads MATITASSSA…ETTTTTNKSM (64 aa). Residues 65 to 83 constitute a thylakoid transit peptide; that stretch reads GASLLAAAAAATISNPAMA. Over 84–103 the chain is Lumenal, thylakoid; sequence LVDERMSTEGTGLPFGLSNN. The chain crosses the membrane as a helical span at residues 104-123; the sequence is LLGWILFGVFGLIWALYFVY. The Stromal portion of the chain corresponds to 124-137; the sequence is ASGLEEDEESGLSL.

As to quaternary structure, part of the photosystem II complex. PSII is composed of 1 copy each of membrane proteins PsbA, PsbB, PsbC, PsbD, numerous small proteins, at least 3 peripheral proteins of the oxygen-evolving complex and a large number of cofactors. It forms dimeric complexes.

The protein resides in the plastid. It is found in the chloroplast thylakoid membrane. Functionally, stabilizes dimeric photosystem II (PSII). In its absence no dimeric PSII accumulates and there is a reduction of monomeric PSII. This chain is Photosystem II reaction center W protein, chloroplastic, found in Spinacia oleracea (Spinach).